A 304-amino-acid chain; its full sequence is Insulin-like growth factor-binding protein 2 (304 aa).

Positions 1 to 34 (MLPRLGGPALPLLLPSLLLLLLLGAGGCGPGVRA) are cleaved as a signal peptide. Positions 36 to 118 (VLFRCPPCTP…VTGAGTCEKR (83 aa)) constitute an IGFBP N-terminal domain. Intrachain disulfides connect Cys-40–Cys-68, Cys-43–Cys-70, Cys-51–Cys-71, Cys-59–Cys-74, Cys-82–Cys-95, Cys-89–Cys-115, Cys-206–Cys-240, Cys-251–Cys-262, and Cys-264–Cys-285. The Thyroglobulin type-1 domain maps to 203 to 285 (RTPCQQELDQ…APTIRGDPEC (83 aa)). The Cell attachment site signature appears at 280 to 282 (RGD).

In terms of assembly, interacts with IGF1. Interacts with IGF2. Interacts (via RGD motif) with integrin alpha5/ITGA5; this interaction induces cell migration, adhesion or apoptosis according to the context. Interacts with PTPRB; this interaction leads to PTPRB dimerization and inactivation. Post-translationally, cleaved by MMP9 leading to release of free IGF2 from IGFBP2-IGF2 complex, which contributes to enhance the motility and the growth of astrocytes. O-glycosylated. In adults, expressed in brain, testes, ovaries, and kidney. Expression in the adult liver is barely detectable.

It is found in the secreted. Multifunctional protein that plays a critical role in regulating the availability of IGFs such as IGF1 and IGF2 to their receptors and thereby regulates IGF-mediated cellular processes including proliferation, differentiation, and apoptosis in a cell-type specific manner. Functions coordinately with receptor protein tyrosine phosphatase beta/PTPRB and the IGF1 receptor to regulate IGF1-mediated signaling by stimulating the phosphorylation of PTEN leading to its inactivation and AKT1 activation. Plays a positive role in cell migration via interaction with integrin alpha5/ITGA5 through an RGD motif. Additionally, interaction with ITGA5/ITGB1 enhances the adhesion of endothelial progenitor cells to endothelial cells. Upon mitochondrial damage, facilitates apoptosis with ITGA5 of podocytes, and then activates the phosphorylation of focal adhesion kinase (FAK)-mediated mitochondrial injury. In Rattus norvegicus (Rat), this protein is Insulin-like growth factor-binding protein 2 (Igfbp2).